A 382-amino-acid polypeptide reads, in one-letter code: Inactive anthranilate O-methyltransferase 1 (382 aa).

Residues Y20, C61, N66, D102, L103, S146, and Y147 each contribute to the S-adenosyl-L-homocysteine site. Mg(2+) is bound by residues E268 and F270.

The protein belongs to the methyltransferase superfamily. Type-7 methyltransferase family. SABATH subfamily.

This chain is Inactive anthranilate O-methyltransferase 1 (AAMT1I), found in Zea mays (Maize).